The chain runs to 125 residues: Urotensin-2 (125 aa).

An N-terminal signal peptide occupies residues 1–20 (MYKLASCCLLFIGFLNPLFS). A propeptide spanning residues 21-111 (LPLLDSGEVS…HLLARIRKPY (91 aa)) is cleaved from the precursor. A disulfide bridge connects residues Cys-119 and Cys-124.

This sequence belongs to the urotensin-2 family.

Its subcellular location is the secreted. Functionally, highly potent vasoconstrictor. This chain is Urotensin-2 (UTS2), found in Macaca mulatta (Rhesus macaque).